A 244-amino-acid polypeptide reads, in one-letter code: Claudin-12 (244 aa).

The Cytoplasmic portion of the chain corresponds to 1 to 10; it reads MGCRDVHAAT. A helical membrane pass occupies residues 11–31; it reads VLSFLCGIASVAGLFAGTLLP. Residues 32 to 87 lie on the Extracellular side of the membrane; sequence NWRKLRLITFNRNEKNLTVYTGLWVKCARYDGGNDCLMYDAAWYSSVDQLDLRVLQ. Residues 88-108 form a helical membrane-spanning segment; the sequence is FALPLSILIAMGALLLCLIGM. Over 109–135 the chain is Cytoplasmic; the sequence is CNTAFRSSVPNIKLAKCLVNSAGCHLV. Residues 136 to 156 traverse the membrane as a helical segment; sequence AGLLFFLAGTVSLSPSIWVIF. Topologically, residues 157-174 are extracellular; that stretch reads YNIHLNRKFEPVFAFDYA. Residues 175-195 form a helical membrane-spanning segment; it reads VYVTVASAGGLFMTALLLFIW. Over 196–244 the chain is Cytoplasmic; the sequence is YCACKSLPSPFWQPLYSHPPGMHTYSQPYSARSRLSAIEIDIPVVSHTT. Residues serine 228 and serine 231 each carry the phosphoserine modification.

Belongs to the claudin family. Interacts with OCLN.

Its subcellular location is the cell junction. It localises to the tight junction. It is found in the cell membrane. Plays a major role in tight junction-specific obliteration of the intercellular space, through calcium-independent cell-adhesion activity. The sequence is that of Claudin-12 (CLDN12) from Bos taurus (Bovine).